The primary structure comprises 181 residues: Protein Syd (181 aa).

It belongs to the Syd family.

It is found in the cell inner membrane. Functionally, interacts with the SecY protein in vivo. May bind preferentially to an uncomplexed state of SecY, thus functioning either as a chelating agent for excess SecY in the cell or as a regulatory factor that negatively controls the translocase function. In Salmonella agona (strain SL483), this protein is Protein Syd.